A 466-amino-acid chain; its full sequence is Dihydrolipoyl dehydrogenase 3 (466 aa).

FAD is bound by residues 33–42 (EGRSTLGGTC), lysine 51, and glycine 115. An intrachain disulfide couples cysteine 42 to cysteine 47. Residues 181-185 (GAGVI), glutamate 204, valine 238, and 271-274 (AIGR) contribute to the NAD(+) site. Aspartate 313 and alanine 321 together coordinate FAD. The Proton acceptor role is filled by histidine 445.

It belongs to the class-I pyridine nucleotide-disulfide oxidoreductase family. Homodimer. It depends on FAD as a cofactor.

The protein localises to the cytoplasm. The enzyme catalyses N(6)-[(R)-dihydrolipoyl]-L-lysyl-[protein] + NAD(+) = N(6)-[(R)-lipoyl]-L-lysyl-[protein] + NADH + H(+). LPD-3 may substitute for lipoamide dehydrogenase of the 2-oxoglutarate dehydrogenase and pyruvate multienzyme complexes when the latter is inactive or missing. The sequence is that of Dihydrolipoyl dehydrogenase 3 (lpd3) from Pseudomonas putida (Arthrobacter siderocapsulatus).